The following is a 246-amino-acid chain: B-cell receptor-associated protein 31 (246 aa).

The Lumenal portion of the chain corresponds to 2-6 (SLQWT). A helical transmembrane segment spans residues 7–27 (AVATFLYAEVFVVLLLCIPFI). The Cytoplasmic segment spans residues 28–43 (SPKRWQKIFKSRLVEL). The helical transmembrane segment at 44–64 (LVSYGNTFFVVLIVILVLLVI) threads the bilayer. The Lumenal segment spans residues 65 to 102 (DAVREIRKYDDVTEKVNLQNNPGAMEHFHMKLFRAQRN). The chain crosses the membrane as a helical span at residues 103–123 (LYIAGFSLLLSFLLRRLVTLI). Over 124–246 (SQQATLLASN…VDGPMDKKEE (123 aa)) the chain is Cytoplasmic. Residues 165–237 (GGKLDVGNAE…EEHAKLQAAV (73 aa)) are a coiled coil. The short motif at 243–246 (KKEE) is the Di-lysine motif element.

Belongs to the BCAP29/BCAP31 family. In terms of assembly, homodimer and heterodimer with BCAP29. Binds CASP8 (isoform 9) as a complex containing BCAP31, BCAP29, BCL2 and/or BCL2L1. Forms a complex (via C-terminus) with TOMM40 which mediates the translocation of components of the mitochondrial membrane respiratory chain NADH dehydrogenase (Complex I) from the cytosol to the mitochondria; within the complex BCAP31 interacts directly with unprocessed and processed NDUFS4 and NDUFB11. Interacts with VDAC1. Interacts with VAMP3, VAMP1 and membrane IgD immunoglobulins. Interacts with HACD2. Interacts with DNM1L; may form part of a larger protein complex at the endoplasmic reticulum-mitochondrial interface during mitochondrial fission. As to quaternary structure, (Microbial infection) Interacts (via C-terminus) with HRSV membrane protein SH; this interaction is direct. Cleaved by CASP8 and other caspases. Ubiquitous. Highly expressed in neurons and discrete endocrine cells.

Its subcellular location is the endoplasmic reticulum membrane. The protein resides in the endoplasmic reticulum-Golgi intermediate compartment membrane. In terms of biological role, functions as a chaperone protein. Is one of the most abundant endoplasmic reticulum (ER) proteins. Plays a role in the export of secreted proteins in the ER, the recognition of abnormally folded protein and their targeting to the ER associated-degradation (ERAD). Also serves as a cargo receptor for the export of transmembrane proteins. Plays a role in the assembly of the mitochondrial membrane respiratory chain NADH dehydrogenase (Complex I) by stimulating the translocation of NDUFS4 and NDUFB11 from the cytosol to the mitochondria via interaction with TOMM40. In response to ER stress, delocalizes from the ER-mitochondria contact sites and binds BCL2. May be involved in CASP8-mediated apoptosis. The protein is B-cell receptor-associated protein 31 of Homo sapiens (Human).